We begin with the raw amino-acid sequence, 128 residues long: Small ribosomal subunit protein bS6 (128 aa).

This sequence belongs to the bacterial ribosomal protein bS6 family.

Functionally, binds together with bS18 to 16S ribosomal RNA. In Thermotoga petrophila (strain ATCC BAA-488 / DSM 13995 / JCM 10881 / RKU-1), this protein is Small ribosomal subunit protein bS6.